Reading from the N-terminus, the 281-residue chain is Para-Rep C1 (281 aa).

Residues 3 to 97 form the CRESS-DNA virus Rep endonuclease domain; it reads TLQGTFWCFT…VAGPWTYGEL (95 aa). The short motif at 10–13 is the RCR-1 element; sequence CFTL. A divalent metal cation contacts are provided by E36 and H42. Residues 42–44 carry the RCR-2 motif; it reads HLQ. The Nuclear localization signal motif lies at 51–71; it reads KRSTLKMMKELLPGAHLEVSK. The For DNA cleavage activity role is filled by Y80. The RCR-3 motif lies at 80–83; the sequence is YAMK. Residue E85 participates in a divalent metal cation binding. A Nuclear localization signal motif is present at residues 97-103; it reads LLKKGSN. Residue 173-181 participates in ATP binding; sequence GPQGGEGKT.

This sequence belongs to the nanoviridea/circoviridae replication-associated protein family. In terms of assembly, homooligomer (Potential). Rep binds to repeated DNA motifs (iterons). Mg(2+) serves as cofactor. The cofactor is Mn(2+).

It is found in the host nucleus. It carries out the reaction ATP + H2O = ADP + phosphate + H(+). Its function is as follows. Initiates and terminates the replication only of its own subviral DNA molecule. The closed circular ssDNA genome is first converted to a superhelical dsDNA. Rep binds a specific hairpin at the genome origin of replication. Introduces an endonucleolytic nick within the intergenic region of the genome, thereby initiating the rolling circle replication (RCR). Following cleavage, binds covalently to the 5'-phosphate of DNA as a tyrosyl ester. The cleavage gives rise to a free 3'-OH that serves as a primer for the cellular DNA polymerase. The polymerase synthesizes the (+) strand DNA by rolling circle mechanism. After one round of replication, a Rep-catalyzed nucleotidyl transfer reaction releases a circular single-stranded virus genome, thereby terminating the replication. Displays origin-specific DNA cleavage, nucleotidyl transferase, ATPase and helicase activities. The protein is Para-Rep C1 (C1) of Milk vetch dwarf C1 alphasatellite (MVDC1A).